The primary structure comprises 486 residues: Argininosuccinate lyase (486 aa).

The protein belongs to the lyase 1 family. Argininosuccinate lyase subfamily.

It localises to the cytoplasm. The catalysed reaction is 2-(N(omega)-L-arginino)succinate = fumarate + L-arginine. It functions in the pathway amino-acid biosynthesis; L-arginine biosynthesis; L-arginine from L-ornithine and carbamoyl phosphate: step 3/3. The chain is Argininosuccinate lyase from Acidovorax ebreus (strain TPSY) (Diaphorobacter sp. (strain TPSY)).